The primary structure comprises 283 residues: Small ribosomal subunit protein uS2 (283 aa).

The segment at 229 to 283 (RSAGKSGEQPAEAEPMPDWERELLEGDGAKTEAKAEEPKAEAKKADEAPEAEKSN) is disordered. A compositionally biased stretch (basic and acidic residues) spans 246-283 (DWERELLEGDGAKTEAKAEEPKAEAKKADEAPEAEKSN).

Belongs to the universal ribosomal protein uS2 family.

This chain is Small ribosomal subunit protein uS2, found in Cutibacterium acnes (strain DSM 16379 / KPA171202) (Propionibacterium acnes).